The primary structure comprises 822 residues: A disintegrin and metallopeptidase domain 3 (822 aa).

The first 16 residues, 1–16, serve as a signal peptide directing secretion; the sequence is MLPLFLVLSYLGQVIA. A Peptidase M12B domain is found at 187 to 384; that stretch reads RILRIKIIMD…PELDCLRNTS (198 aa). 7 cysteine pairs are disulfide-bonded: Cys-296–Cys-379, Cys-338–Cys-363, Cys-340–Cys-345, Cys-456–Cys-476, Cys-623–Cys-635, Cys-629–Cys-641, and Cys-643–Cys-652. The 90-residue stretch at 395–484 folds into the Disintegrin domain; it reads GSYCGNHLLE…GCAPDTKAAD (90 aa). In terms of domain architecture, EGF-like spans 619 to 653; it reads GTRECEADDKCQGHGICNNLNNCQCESGFAPPECD. The chain crosses the membrane as a helical span at residues 689–709; sequence VLLISFYILLPFLVVLAFMAV.

As to quaternary structure, interacts with LY6K. Interacts with TEX101. Post-translationally, initially synthesized as a 110-kDa precursor in round spermatids, and the precursor is then processed into a 42-kDa mature protein during the sperm transport into and/or once in the epididymis. As to expression, expressed in sperm (at protein level).

It is found in the cell membrane. In terms of biological role, involved in fertilization by controlling sperm migration into the oviduct. Promotes the binding of sperm to the oocyte zona pellucida. The sequence is that of A disintegrin and metallopeptidase domain 3 from Mus musculus (Mouse).